The chain runs to 80 residues: Raniseptin-8 (80 aa).

The N-terminal stretch at 1–22 (MAFLKKSLFLVLFLGIVSLSIC) is a signal peptide. Positions 23–49 (EEEKREGEEEEKQEEENEELSEEELRE) are excised as a propeptide. The tract at residues 27–46 (REGEEEEKQEEENEELSEEE) is disordered. Residues 30-44 (EEEEKQEEENEELSE) show a composition bias toward acidic residues.

It belongs to the frog skin active peptide (FSAP) family. Dermaseptin subfamily. In terms of tissue distribution, expressed by the skin glands.

The protein localises to the secreted. Has antibacterial activity. The polypeptide is Raniseptin-8 (Boana raniceps (Chaco tree frog)).